The chain runs to 275 residues: NH(3)-dependent NAD(+) synthetase (275 aa).

Position 50 to 57 (50 to 57) interacts with ATP; it reads GISGGVDS. A Mg(2+)-binding site is contributed by aspartate 56. Arginine 147 contacts deamido-NAD(+). Residue threonine 167 coordinates ATP. Residue glutamate 172 coordinates Mg(2+). Residues lysine 180 and aspartate 187 each coordinate deamido-NAD(+). Lysine 196 and threonine 218 together coordinate ATP. 267 to 268 serves as a coordination point for deamido-NAD(+); that stretch reads HK.

Belongs to the NAD synthetase family. As to quaternary structure, homodimer.

It catalyses the reaction deamido-NAD(+) + NH4(+) + ATP = AMP + diphosphate + NAD(+) + H(+). It participates in cofactor biosynthesis; NAD(+) biosynthesis; NAD(+) from deamido-NAD(+) (ammonia route): step 1/1. Its function is as follows. Catalyzes the ATP-dependent amidation of deamido-NAD to form NAD. Uses ammonia as a nitrogen source. This Ectopseudomonas mendocina (strain ymp) (Pseudomonas mendocina) protein is NH(3)-dependent NAD(+) synthetase.